The primary structure comprises 250 residues: tRNA (guanine-N(1)-)-methyltransferase (250 aa).

S-adenosyl-L-methionine-binding positions include G116 and 136 to 141; that span reads IGDYVL.

Belongs to the RNA methyltransferase TrmD family. As to quaternary structure, homodimer.

The protein resides in the cytoplasm. It catalyses the reaction guanosine(37) in tRNA + S-adenosyl-L-methionine = N(1)-methylguanosine(37) in tRNA + S-adenosyl-L-homocysteine + H(+). Functionally, specifically methylates guanosine-37 in various tRNAs. This Pseudomonas syringae pv. tomato (strain ATCC BAA-871 / DC3000) protein is tRNA (guanine-N(1)-)-methyltransferase.